Consider the following 470-residue polypeptide: Macrophage metalloelastase (470 aa).

Residues 1–16 (MKFLLILLLQATASGA) form the signal peptide. The propeptide at 17-105 (LPLNSSTSLE…DVHHFREMPG (89 aa)) is activation peptide. Asn20 is a glycosylation site (N-linked (GlcNAc...) asparagine). Positions 90-97 (PRCGVPDV) match the Cysteine switch motif. Position 92 (Cys92) interacts with Zn(2+). Residues Asp124 and Asp158 each coordinate Ca(2+). Residues His168 and Asp170 each coordinate Zn(2+). 4 residues coordinate Ca(2+): Asp175, Gly176, Gly178, and Ile180. Position 183 (His183) interacts with Zn(2+). Ca(2+)-binding residues include Gly190, Gly192, and Asp194. His196 provides a ligand contact to Zn(2+). Positions 198, 199, and 201 each coordinate Ca(2+). Residue His218 participates in Zn(2+) binding. Residue Glu219 is part of the active site. Zn(2+) contacts are provided by His222 and His228. 4 Hemopexin repeats span residues 279–328 (PALC…WPTL), 329–375 (PSGI…GFPN), 377–425 (VKKI…FQGI), and 426–470 (GPKI…WFGC). Cys282 and Cys470 form a disulfide bridge. A glycan (N-linked (GlcNAc...) asparagine) is linked at Asn285. Residues Asp289, Glu333, Asp381, and Asp430 each coordinate Ca(2+).

Belongs to the peptidase M10A family. It depends on Ca(2+) as a cofactor. Requires Zn(2+) as cofactor. As to expression, found in alveolar macrophages but not in peripheral blood monocytes.

Its subcellular location is the secreted. It localises to the extracellular space. The protein resides in the extracellular matrix. The enzyme catalyses Hydrolysis of soluble and insoluble elastin. Specific cleavages are also produced at 14-Ala-|-Leu-15 and 16-Tyr-|-Leu-17 in the B chain of insulin.. Its function is as follows. May be involved in tissue injury and remodeling. Has significant elastolytic activity. Can accept large and small amino acids at the P1' site, but has a preference for leucine. Aromatic or hydrophobic residues are preferred at the P1 site, with small hydrophobic residues (preferably alanine) occupying P3. This is Macrophage metalloelastase (MMP12) from Homo sapiens (Human).